The primary structure comprises 390 residues: Glucose-fructose oxidoreductase domain-containing protein 1 (390 aa).

The first 21 residues, 1–21, serve as a signal peptide directing secretion; the sequence is MLPGVGVFGTSLTARVIIPLL.

Belongs to the Gfo/Idh/MocA family. In terms of assembly, homodimer. Interacts with NKIRAS2.

It is found in the secreted. Probably catalytically inactive enzyme. Does not bind NAD or NADP. The polypeptide is Glucose-fructose oxidoreductase domain-containing protein 1 (Gfod1) (Mus musculus (Mouse)).